A 77-amino-acid polypeptide reads, in one-letter code: Small ribosomal subunit protein uS17 (77 aa).

Belongs to the universal ribosomal protein uS17 family. Part of the 30S ribosomal subunit.

Functionally, one of the primary rRNA binding proteins, it binds specifically to the 5'-end of 16S ribosomal RNA. The polypeptide is Small ribosomal subunit protein uS17 (Rickettsia prowazekii (strain Madrid E)).